A 395-amino-acid chain; its full sequence is Succinate--CoA ligase [ADP-forming] subunit beta (395 aa).

Positions 9–240 constitute an ATP-grasp domain; that stretch reads RDVFEKHGVP…AASADPLEAK (232 aa). Residues Lys49, 56 to 58, Ala98, and Glu103 each bind ATP; that span reads GRG. Mg(2+)-binding residues include Asn195 and Asp209. Substrate-binding positions include Asn260 and 322-324; that span reads GIT.

It belongs to the succinate/malate CoA ligase beta subunit family. In terms of assembly, heterotetramer of two alpha and two beta subunits. Mg(2+) serves as cofactor.

The catalysed reaction is succinate + ATP + CoA = succinyl-CoA + ADP + phosphate. It carries out the reaction GTP + succinate + CoA = succinyl-CoA + GDP + phosphate. It participates in carbohydrate metabolism; tricarboxylic acid cycle; succinate from succinyl-CoA (ligase route): step 1/1. Its function is as follows. Succinyl-CoA synthetase functions in the citric acid cycle (TCA), coupling the hydrolysis of succinyl-CoA to the synthesis of either ATP or GTP and thus represents the only step of substrate-level phosphorylation in the TCA. The beta subunit provides nucleotide specificity of the enzyme and binds the substrate succinate, while the binding sites for coenzyme A and phosphate are found in the alpha subunit. This Beutenbergia cavernae (strain ATCC BAA-8 / DSM 12333 / CCUG 43141 / JCM 11478 / NBRC 16432 / NCIMB 13614 / HKI 0122) protein is Succinate--CoA ligase [ADP-forming] subunit beta.